Here is a 418-residue protein sequence, read N- to C-terminus: Enolase (418 aa).

Q162 provides a ligand contact to (2R)-2-phosphoglycerate. The active-site Proton donor is the E204. The Mg(2+) site is built by D241, E283, and D309. The (2R)-2-phosphoglycerate site is built by K334, R363, S364, and K385. The active-site Proton acceptor is K334.

This sequence belongs to the enolase family. The cofactor is Mg(2+).

It is found in the cytoplasm. The protein localises to the secreted. Its subcellular location is the cell surface. The enzyme catalyses (2R)-2-phosphoglycerate = phosphoenolpyruvate + H2O. It functions in the pathway carbohydrate degradation; glycolysis; pyruvate from D-glyceraldehyde 3-phosphate: step 4/5. In terms of biological role, catalyzes the reversible conversion of 2-phosphoglycerate (2-PG) into phosphoenolpyruvate (PEP). It is essential for the degradation of carbohydrates via glycolysis. In Pelagibacter ubique (strain HTCC1062), this protein is Enolase.